The following is a 67-amino-acid chain: Large ribosomal subunit protein bL35 (67 aa).

Belongs to the bacterial ribosomal protein bL35 family.

The polypeptide is Large ribosomal subunit protein bL35 (Synechocystis sp. (strain ATCC 27184 / PCC 6803 / Kazusa)).